A 265-amino-acid chain; its full sequence is Neuronal membrane glycoprotein M6-b (265 aa).

Residues 31-51 traverse the membrane as a helical segment; sequence GGVPYASLVATILCFSGVALF. Asparagine 73 carries N-linked (GlcNAc...) asparagine glycosylation. 2 consecutive transmembrane segments (helical) span residues 90–110 and 136–156; these read VIYG…AEGF and FVFL…FSAV. Asparagine 177 is a glycosylation site (N-linked (GlcNAc...) asparagine). A helical membrane pass occupies residues 224 to 244; the sequence is LFIVACAGAGATVIALLIYMM. The residue at position 257 (serine 257) is a Phosphoserine.

This sequence belongs to the myelin proteolipid protein family. Interacts with SERT.

It localises to the membrane. It is found in the cell membrane. May be involved in neural development. Involved in regulation of osteoblast function and bone formation. Involved in matrix vesicle release by osteoblasts; this function seems to involve maintenance of the actin cytoskeleton. May be involved in cellular trafficking of SERT and thereby in regulation of serotonin uptake. This Pongo abelii (Sumatran orangutan) protein is Neuronal membrane glycoprotein M6-b (GPM6B).